The chain runs to 766 residues: Flocculation suppression protein (766 aa).

Disordered regions lie at residues 1 to 52 (MSEE…HGSK), 129 to 181 (HDHS…PTKI), 203 to 247 (KRRA…SSNS), 547 to 619 (KPVP…SISG), and 657 to 766 (SVTP…KVKM). Low complexity-rich tracts occupy residues 8–19 (SAPAPASTPAPA) and 134–147 (NDAN…TNDD). Residues 64-186 (IFIHKLYQIL…NPTKIWEFKH (123 aa)) mediate DNA binding. Over residues 171–181 (QEKEKSNPTKI) the composition is skewed to basic and acidic residues. The span at 208 to 224 (SRNNSSINSRKNSSNQN) shows a compositional bias: low complexity. Phosphoserine is present on Ser-220. A compositionally biased stretch (polar residues) spans 236–247 (SSIQDPSTSSNS). A Phosphoserine modification is found at Ser-556. Positions 679 to 699 (AVSSNLINSPMNVEHSSSLSQ) are enriched in polar residues. Positions 708–719 (LPQPSLPTTSTT) are enriched in low complexity. Ser-733 carries the post-translational modification Phosphoserine. The segment covering 738–750 (LLNQEDSSTSSAD) has biased composition (polar residues).

This sequence in the N-terminal section; belongs to the HSF family.

The protein resides in the nucleus. Involved in cell surface assembly and regulation of the gene related to flocculation (asexual cell aggregation). Mutations in SFL1 causes constitutive cell aggregation. The protein is Flocculation suppression protein (SFL1) of Saccharomyces cerevisiae (strain ATCC 204508 / S288c) (Baker's yeast).